The following is a 230-amino-acid chain: NAD(P)H-quinone oxidoreductase subunit K, chloroplastic (230 aa).

[4Fe-4S] cluster is bound by residues Cys43, Cys44, Cys108, and Cys139.

This sequence belongs to the complex I 20 kDa subunit family. In terms of assembly, NDH is composed of at least 16 different subunits, 5 of which are encoded in the nucleus. [4Fe-4S] cluster serves as cofactor.

Its subcellular location is the plastid. It localises to the chloroplast thylakoid membrane. It carries out the reaction a plastoquinone + NADH + (n+1) H(+)(in) = a plastoquinol + NAD(+) + n H(+)(out). The enzyme catalyses a plastoquinone + NADPH + (n+1) H(+)(in) = a plastoquinol + NADP(+) + n H(+)(out). In terms of biological role, NDH shuttles electrons from NAD(P)H:plastoquinone, via FMN and iron-sulfur (Fe-S) centers, to quinones in the photosynthetic chain and possibly in a chloroplast respiratory chain. The immediate electron acceptor for the enzyme in this species is believed to be plastoquinone. Couples the redox reaction to proton translocation, and thus conserves the redox energy in a proton gradient. The polypeptide is NAD(P)H-quinone oxidoreductase subunit K, chloroplastic (Lotus japonicus (Lotus corniculatus var. japonicus)).